The primary structure comprises 509 residues: Src substrate cortactin (509 aa).

The interval 1–28 (MWKASAGHAVSITQDDGGADDWETDPDF) is disordered. The span at 17 to 28 (GGADDWETDPDF) shows a compositional bias: acidic residues. Cortactin repeat units lie at residues 80–116 (ASHG…SQVD), 117–153 (SVRG…SQKD), 154–190 (YSSG…SQKD), 191–227 (YSKG…SQKD), and 228–264 (YVKG…SQKD). An N6-acetyllysine mark is found at K87 and K107. Phosphoserine is present on S113. R119 carries the omega-N-methylarginine modification. K124 carries the N6-acetyllysine modification. K144 carries the post-translational modification N6-acetyllysine; alternate. K144 participates in a covalent cross-link: Glycyl lysine isopeptide (Lys-Gly) (interchain with G-Cter in SUMO1); alternate. A Glycyl lysine isopeptide (Lys-Gly) (interchain with G-Cter in SUMO2); alternate cross-link involves residue K144. S150 bears the Phosphoserine mark. K152, K161, and K171 each carry N6-acetyllysine. K181 carries the post-translational modification N6-acetyllysine; alternate. A Glycyl lysine isopeptide (Lys-Gly) (interchain with G-Cter in SUMO1); alternate cross-link involves residue K181. Residue K181 forms a Glycyl lysine isopeptide (Lys-Gly) (interchain with G-Cter in SUMO2); alternate linkage. 2 positions are modified to N6-acetyllysine: K193 and K198. A Glycyl lysine isopeptide (Lys-Gly) (interchain with G-Cter in SUMO1) cross-link involves residue K218. An N6-acetyllysine modification is found at K235. At S261 the chain carries Phosphoserine. A Cortactin 6; truncated repeat occupies 265–287 (YAKGFGGKYGVQKDRMDKNASTF). An N6-acetyllysine mark is found at K267, K272, K277, and K309. A coiled-coil region spans residues 311 to 364 (SNIRANFENLAKEREQEDRRKAEAERAQRMAQERQEQEEARRKLEEQARAKKQT). The disordered stretch occupies residues 318-409 (ENLAKEREQE…EPEPEYSTEA (92 aa)). A compositionally biased stretch (basic and acidic residues) spans 320–359 (LAKEREQEDRRKAEAERAQRMAQERQEQEEARRKLEEQAR). Residue T364 is modified to Phosphothreonine. 4 positions are modified to phosphoserine: S368, S370, S380, and S381. Y384 is subject to Phosphotyrosine; by FAK1. The segment covering 393 to 406 (EPSYGSSEPEPEYS) has biased composition (low complexity). At Y405 the chain carries Phosphotyrosine. S406 bears the Phosphoserine mark. A phosphotyrosine; by FAK1 mark is found at Y429 and Y445. A phosphotyrosine; by SRC mark is found at Y445 and Y448. An SH3 domain is found at 451 to 509 (DLGITAIALYDYQAAGDDEISFDPDDVITNIEMIDDGWWRGVCKGRYGLFPANYVELRQ).

In terms of assembly, part of a complex composed of NEDD9, AURKA and CTTN; within the complex NEDD9 acts as a scaffold protein and is required for complex formation. Interacts (via N-terminus) with NEDD9. Identified in a complex containing FGFR4, NCAM1, CDH2, PLCG1, FRS2, SRC, SHC1, GAP43 and CTTN. Forms a complex with ABL1 and MYLK. Interacts with SHANK2 and SHANK3 (via its SH3 domain). Interacts with PLXDC2 and SRCIN1. Interacts with SAMSN1 (via SH3 domain). Interacts (via SH3 domain) with ASAP1 (via Pro-rich region). Interacts with FER. Interacts with FGD1. Interacts with ABL2. Interacts with CTTNBP2NL; this interaction may target CTTN to stress fibers. Interacts with CTTNBP2; this interaction may target CTTN at the cell cortex or dendritic spines. Interacts (via SH3 domain) with DNM2. Interacts with ACTN1. Interacts with KCNA2 (via non-phosphorylated C-terminus). Interacts with PTK2/FAK1. Interacts with KCNH1. Interacts (via SH3 domain) with DIP2A (via N-terminus); the interaction enhances CTTN acetylation and is required for proper synaptic transmission. Interacts with XIRP1 (via N-terminus); the interaction promotes CTTN localization to intercalated disks in cardiomyocytes. Post-translationally, acetylated. Phosphorylated by FER. Phosphorylated in response to FGR activation. Phosphorylation by SRC promotes MYLK binding. Tyrosine phosphorylation in transformed cells may contribute to cellular growth regulation and transformation. Phosphorylated by PKN2 at both serine and threonine residues in a GTP-bound Rac1-dependent manner in hyaluronan-induced astrocytes and hence down-regulated CTTN ability to associate with filamentous actin. Phosphorylated on tyrosine residues in response to CHRM1 activation. Phosphorylated by PTK2/FAK1 in response to cell adhesion. As to expression, detected in liver (at protein level).

It is found in the cytoplasm. The protein resides in the cytoskeleton. Its subcellular location is the cell projection. It localises to the lamellipodium. The protein localises to the ruffle. It is found in the dendrite. The protein resides in the cell membrane. Its subcellular location is the podosome. It localises to the cell junction. The protein localises to the focal adhesion. It is found in the membrane. The protein resides in the clathrin-coated pit. Its subcellular location is the dendritic spine. It localises to the cell cortex. The protein localises to the endoplasmic reticulum. Contributes to the organization of the actin cytoskeleton and cell shape. Plays a role in the formation of lamellipodia and in cell migration. Plays a role in the regulation of neuron morphology, axon growth and formation of neuronal growth cones. Through its interaction with CTTNBP2, involved in the regulation of neuronal spine density. Plays a role in focal adhesion assembly and turnover. In complex with ABL1 and MYLK regulates cortical actin-based cytoskeletal rearrangement critical to sphingosine 1-phosphate (S1P)-mediated endothelial cell (EC) barrier enhancement. Plays a role in intracellular protein transport and endocytosis, and in modulating the levels of potassium channels present at the cell membrane. Plays a role in receptor-mediated endocytosis via clathrin-coated pits. Required for stabilization of KCNH1 channels at the cell membrane. The chain is Src substrate cortactin from Rattus norvegicus (Rat).